Reading from the N-terminus, the 145-residue chain is Large ribosomal subunit protein uL16 (145 aa).

This sequence belongs to the universal ribosomal protein uL16 family. Part of the 50S ribosomal subunit.

Binds 23S rRNA and is also seen to make contacts with the A and possibly P site tRNAs. This chain is Large ribosomal subunit protein uL16, found in Lactobacillus gasseri (strain ATCC 33323 / DSM 20243 / BCRC 14619 / CIP 102991 / JCM 1131 / KCTC 3163 / NCIMB 11718 / NCTC 13722 / AM63).